A 350-amino-acid chain; its full sequence is Atypical chemokine receptor 4 (350 aa).

Topologically, residues 1–42 (MALEQNQSTDYYYEENEMNGTYDYSQYELICIKEDVREFAKV) are extracellular. N-linked (GlcNAc...) asparagine glycosylation is found at Asn-6 and Asn-19. The chain crosses the membrane as a helical span at residues 43-63 (FLPVFLTIVFVIGLAGNSMVV). Residues 64–87 (AIYAYYKKQRTKTDVYILNLAVAD) are Cytoplasmic-facing. The helical transmembrane segment at 88 to 108 (LLLLFTLPFWAVNAVHGWVLG) threads the bilayer. Residues 109–113 (KIMCK) are Extracellular-facing. A disulfide bridge connects residues Cys-112 and Cys-184. The chain crosses the membrane as a helical span at residues 114–134 (ITSALYTLNFVSGMQFLACIS). Topologically, residues 135–154 (IDRYVAVTKVPSQSGVGKPC) are cytoplasmic. The chain crosses the membrane as a helical span at residues 155 to 175 (WIICFCVWMAAILLSIPQLVF). The Extracellular segment spans residues 176–201 (YTVNDNARCIPIFPRYLGTSMKALIQ). A helical membrane pass occupies residues 202-222 (MLEICIGFVVPFLIMGVCYFI). Over 223–240 (TARTLMKMPNIKISRPLK) the chain is Cytoplasmic. Residues 241–261 (VLLTVVIVFIVTQLPYNIVKF) form a helical membrane-spanning segment. Residues 262–289 (CRAIDIIYSLITSCNMSKRMDIAIQVTE) lie on the Extracellular side of the membrane. Residues 290 to 310 (SIALFHSCLNPILYVFMGASF) form a helical membrane-spanning segment. Residues 311 to 350 (KNYVMKVAKKYGSWRRQRQSVEEFPFDSEGPTEPTSTFSI) are Cytoplasmic-facing.

The protein belongs to the G-protein coupled receptor 1 family. Atypical chemokine receptor subfamily. In terms of assembly, forms heteromers with CXCR3. Interacts with ARRB1 and ARRB2. In terms of processing, the Ser/Thr residues in the C-terminal cytoplasmic tail may be phosphorylated. In terms of tissue distribution, predominantly expressed in heart. Lower expression in lung, pancreas, spleen, colon, skeletal muscle and small intestine.

The protein resides in the early endosome. Its subcellular location is the recycling endosome. It is found in the cell membrane. Its function is as follows. Atypical chemokine receptor that controls chemokine levels and localization via high-affinity chemokine binding that is uncoupled from classic ligand-driven signal transduction cascades, resulting instead in chemokine sequestration, degradation, or transcytosis. Also known as interceptor (internalizing receptor) or chemokine-scavenging receptor or chemokine decoy receptor. Acts as a receptor for chemokines CCL2, CCL8, CCL13, CCL19, CCL21 and CCL25. Chemokine-binding does not activate G-protein-mediated signal transduction but instead induces beta-arrestin recruitment, leading to ligand internalization. Plays an important role in controlling the migration of immune and cancer cells that express chemokine receptors CCR7 and CCR9, by reducing the availability of CCL19, CCL21, and CCL25 through internalization. Negatively regulates CXCR3-induced chemotaxis. Regulates T-cell development in the thymus. In Homo sapiens (Human), this protein is Atypical chemokine receptor 4 (ACKR4).